We begin with the raw amino-acid sequence, 294 residues long: Octopine-binding periplasmic protein (294 aa).

The first 20 residues, 1–20 (MRLKSIMCAALFVVAGQAAA), serve as a signal peptide directing secretion. A disulfide bond links C57 and C64.

It belongs to the bacterial solute-binding protein 3 family.

The protein localises to the periplasm. In terms of biological role, component of the octopine active transport system probably consisting of four subunits: Q, M, P and T. In Rhizobium meliloti (Ensifer meliloti), this protein is Octopine-binding periplasmic protein (occT).